A 201-amino-acid polypeptide reads, in one-letter code: Potassium-transporting ATPase KdpC subunit (201 aa).

The helical transmembrane segment at 12 to 34 (LLALTMITGLAYPLAVTGLATVL) threads the bilayer. Residues 73-102 (TVAPDPADSSKTVSAPYNAANSGGSNLGPT) are disordered. Residues 81 to 101 (SSKTVSAPYNAANSGGSNLGP) show a composition bias toward polar residues.

It belongs to the KdpC family. In terms of assembly, the system is composed of three essential subunits: KdpA, KdpB and KdpC.

The protein resides in the cell inner membrane. In terms of biological role, part of the high-affinity ATP-driven potassium transport (or Kdp) system, which catalyzes the hydrolysis of ATP coupled with the electrogenic transport of potassium into the cytoplasm. This subunit acts as a catalytic chaperone that increases the ATP-binding affinity of the ATP-hydrolyzing subunit KdpB by the formation of a transient KdpB/KdpC/ATP ternary complex. This Rhodopseudomonas palustris (strain ATCC BAA-98 / CGA009) protein is Potassium-transporting ATPase KdpC subunit.